We begin with the raw amino-acid sequence, 153 residues long: Endoribonuclease YbeY (153 aa).

Positions 118, 122, and 128 each coordinate Zn(2+).

It belongs to the endoribonuclease YbeY family. The cofactor is Zn(2+).

It is found in the cytoplasm. Its function is as follows. Single strand-specific metallo-endoribonuclease involved in late-stage 70S ribosome quality control and in maturation of the 3' terminus of the 16S rRNA. This Oenococcus oeni (strain ATCC BAA-331 / PSU-1) protein is Endoribonuclease YbeY.